A 470-amino-acid chain; its full sequence is MEKAKFKVVIVGGSITGLTLAHCLHQANIDHIVLERRHEIAPQEGASIGLWPNGGQILDQLGLYGELEKLTEPLNVMHVVYPDGFSYSNTLFRQIRERFGYPVFFMDRQKLLDVLYKTYPNKSKILVNKLVTELRQSDGAACVMTDDGSTYEGNLIVGADGVHSRLRSEIWRLADINQPGLVTAEEKQSMTVEYSCIFGISSPLPGLASGEHVNAYMNGLTVLTFHGKGGRVYWFVIQKLDRKFTYPNVPRFSLDDAERSCTALAKIRIWRDICIGHLWQAREVASMTALEENIFTTWHYQRAILLGDSIHKMTPNIGQGANSGIEDAALLASLINHLVNIQAIKQPSDLTVNRMLENFEAIRYPRMEKIYRRSKFGVRMHTRDDLFKRILGRYVIPLTKDRLAVMASQLIVDGAVLDFLPQPKRRSGPGWPKPGNCRDGQNGHKRIQYILMSIVLVAPAWVYIFSSLVW.

A signal peptide spans 1–23; sequence MEKAKFKVVIVGGSITGLTLAHC. FAD contacts are provided by Glu-35, Gly-49, and Arg-108. A glycan (N-linked (GlcNAc...) asparagine) is linked at Asn-121. The active site involves Tyr-216. Residues Asp-308 and Ala-321 each contribute to the FAD site. The helical transmembrane segment at 450–470 threads the bilayer; it reads ILMSIVLVAPAWVYIFSSLVW.

Belongs to the paxM FAD-dependent monooxygenase family. Requires FAD as cofactor.

It localises to the membrane. It carries out the reaction (3R)-3-farnesyl-6-hydroxy-2,3,5-trimethyl-4-oxocyclohexa-1,5-diene-1-carboxylate + 2-oxoglutarate + O2 = (3R)-[(10S)-11-epoxyfarnesyl]-2,3,5-trimethyl-6-oxido-4-oxocyclohexa-1,5-diene-1-carboxylate + succinate + CO2. It participates in secondary metabolite biosynthesis; terpenoid biosynthesis. FAD-dependent monooxygenase; part of the gene cluster that mediates the biosynthesis of novofumigatonin, a heavily oxygenated meroterpenoid containing a unique orthoester moiety. The first step of the pathway is the synthesis of 3,5-dimethylorsellinic acid (DMOA) by the polyketide synthase nvfA via condensation of one acetyl-CoA starter unit with 3 malonyl-CoA units and 2 methylations. DMOA is then converted to farnesyl-DMOA by the farnesyltransferase nvfB. Epoxydation by FAD-dependent monooxygenase nvfK, followed by a protonation-initiated cyclization catalyzed by the terpene cyclase nvfL leads to the production of asnavolin H. The short chain dehydrogenase nvfC then as a 3-OH dehydrogenase of asnovolin H to yield chemesin D. There are two branches to synthesize asnovolin A from chemesin D. In one branch, chemesin D undergoes Baeyer-Villiger oxidation by nvfH, methylation by nvfJ, and enoyl reduction by the nvfM D enoylreductase that reduces the double bond between C-5'and C-6', to form respectively asnovolin I, asnovolin K, and asnovolin A. In the other branch, the methylation precedes the Baeyer-Villiger oxidation and the enoyl reduction to yield asnovolin A via the asnovolin J intermediate. Asnovolin A is further converted to fumigatonoid A by the Fe(II)/2-oxoglutarate-dependent dioxygenase nvfI that catalyzes an endoperoxidation reaction. The alpha/beta hydrolase nvfD then acts as an epimerase that converts fumigatonoid A to its C-5' epimer, which then undergoes spontaneous or nvfD-catalyzed lactonization. The following step utilizes the ketoreductase nvfG to produce fumigatonoid B. The dioxygenase nvfE further converts fumigatonoid B into fumigatonoid C. Finally the Fe(II)/2-oxoglutarate-dependent dioxygenase nvfF catalyzes two rounds of oxidation to transform fumigatonoid C into the end product, novofumigatonin A. This Aspergillus novofumigatus (strain IBT 16806) protein is FAD-dependent monooxygenase nvfK.